A 704-amino-acid polypeptide reads, in one-letter code: MIHDPAEPPAAAAEPPLDTASPDGAAPVADTRPAAGNQDIDAATASLAVEEDDEARLPEVEDEPEAEPAQAGAGPMAVGRSAIARAVRLAPTSPGVYRMLNAERDVLYVGKAKNVKKRLASYARPTGQVLRIARMIALTVEVEVISTTTETEALLLEANLIKQLRPRFNVQLRDDKSFPYILITSDHWAPQILKHRGAQSRPGRYFGPFASAGAVNRTITALQRAFLVRSCTDSFFESRTRPCLLYQIRRCAGPCTGEVDFPGYSELVREATDFLSGRSRAVKELLAAEMEKASGELEFETAALYRDRLAALSAIQSQQGINPRTVEEADVFAIHQDGGYSCVEVFFFRTGQNWGNRAYFPRAEKSFTPAEVLGAFVAQFYDDKPPPKLILLSHEIEEAELLADALCVKAGHKVEITVPKRGEKKELVAHAQTNAREALGRKLADTATQARLLENLATTLGLPKTPQRIEVYDNSHIQGTNAVGAMIVAGPDGFIKNQYRKFNIRSEGLTPGDDYAMMREVLQRRFKRLVTSQAEGDGEAAAKAKPKDDDVPQWPDLVIIDGGRGQLNAAREALSGIGLTDQVTLLGVAKGPDRDAGRETLFLPDRDAIKLEPRDPVLYFIQRLRDEAHRFVIGSHRTLRKKDIREAGLQEIPGIGPTRKRALLLHFGTLKEIERASIADLGKVPGISAESAKRIFEFFHARPD.

The segment at 1-77 (MIHDPAEPPA…PAQAGAGPMA (77 aa)) is disordered. Acidic residues predominate over residues 49 to 66 (VEEDDEARLPEVEDEPEA). Residues 67–77 (EPAQAGAGPMA) show a composition bias toward low complexity. Residues 92 to 170 (TSPGVYRMLN…IKQLRPRFNV (79 aa)) form the GIY-YIG domain. The 36-residue stretch at 280 to 315 (RAVKELLAAEMEKASGELEFETAALYRDRLAALSAI) folds into the UVR domain.

It belongs to the UvrC family. As to quaternary structure, interacts with UvrB in an incision complex.

Its subcellular location is the cytoplasm. Functionally, the UvrABC repair system catalyzes the recognition and processing of DNA lesions. UvrC both incises the 5' and 3' sides of the lesion. The N-terminal half is responsible for the 3' incision and the C-terminal half is responsible for the 5' incision. The sequence is that of UvrABC system protein C from Rhodopseudomonas palustris (strain ATCC BAA-98 / CGA009).